The following is a 342-amino-acid chain: MTDRYILAVESSCDETSVAILKNESTLLSNVIASQVESHKRFGGVVPEVASRHHVEVITTCFEDALQEAGISASDLSAVAVTYGPGLVGALLVGLAAAKAFAWANHLPLIPVNHMAGHLMAAREQKPLVYPLIALLVSGGHTELVYVPEPGDYHIIGETRDDAVGEAYDKVGRVMGLTYPAGREIDQLAHKGQDTYHFPRAMITEDHLEFSFSGLKSAFINLHHNAKQKGDELILEDLCASFQAAVLDILLAKTKKALSRYPAKMLVVAGGVAANQGLRDRLAQEITHIEVVIPKLRLCGDNAGMIALAAAIEYDKQHFANMSLNAKPSLAFDQFPDSFVIN.

The Fe cation site is built by His114 and His118. Residues 136 to 140 (LVSGG), Asp169, Gly182, Asp186, and Asn275 each bind substrate. Residue Asp301 coordinates Fe cation.

Belongs to the KAE1 / TsaD family. Fe(2+) is required as a cofactor.

It localises to the cytoplasm. The enzyme catalyses L-threonylcarbamoyladenylate + adenosine(37) in tRNA = N(6)-L-threonylcarbamoyladenosine(37) in tRNA + AMP + H(+). Functionally, required for the formation of a threonylcarbamoyl group on adenosine at position 37 (t(6)A37) in tRNAs that read codons beginning with adenine. Is involved in the transfer of the threonylcarbamoyl moiety of threonylcarbamoyl-AMP (TC-AMP) to the N6 group of A37, together with TsaE and TsaB. TsaD likely plays a direct catalytic role in this reaction. The sequence is that of tRNA N6-adenosine threonylcarbamoyltransferase from Streptococcus pyogenes serotype M3 (strain ATCC BAA-595 / MGAS315).